Here is a 428-residue protein sequence, read N- to C-terminus: Glutamate--tRNA ligase 2 (428 aa).

A 'HIGH' region motif is present at residues 6–16; sequence PSPTGDMRTEQ.

This sequence belongs to the class-I aminoacyl-tRNA synthetase family. Glutamate--tRNA ligase type 1 subfamily. As to quaternary structure, monomer.

It localises to the cytoplasm. The enzyme catalyses tRNA(Glu) + L-glutamate + ATP = L-glutamyl-tRNA(Glu) + AMP + diphosphate. In terms of biological role, catalyzes the attachment of glutamate to tRNA(Glu) in a two-step reaction: glutamate is first activated by ATP to form Glu-AMP and then transferred to the acceptor end of tRNA(Glu). In Sulfurovum sp. (strain NBC37-1), this protein is Glutamate--tRNA ligase 2.